We begin with the raw amino-acid sequence, 517 residues long: Argininosuccinate lyase, chloroplastic (517 aa).

The transit peptide at 1–45 (MGAIDLSFSQSLLFSSSRSNLSSSTHRSVSFLPPGSKSRCLPPLR) directs the protein to the chloroplast. 2-(N(omega)-L-arginino)succinate is bound by residues Ser79, Asn166, and Thr211. His212 (proton acceptor) is an active-site residue. Residue Ser333 is the Proton donor of the active site. 4 residues coordinate 2-(N(omega)-L-arginino)succinate: Asn341, Tyr373, Gln378, and Lys381.

The protein belongs to the lyase 1 family. Argininosuccinate lyase subfamily.

Its subcellular location is the plastid. The protein resides in the chloroplast. The catalysed reaction is 2-(N(omega)-L-arginino)succinate = fumarate + L-arginine. Its pathway is amino-acid biosynthesis; L-arginine biosynthesis; L-arginine from L-ornithine and carbamoyl phosphate: step 3/3. The protein is Argininosuccinate lyase, chloroplastic of Arabidopsis thaliana (Mouse-ear cress).